We begin with the raw amino-acid sequence, 716 residues long: Probable calcium-binding mitochondrial carrier K02F3.2 (716 aa).

Residues 1–345 (MSFDHLLTSS…CLKDIQAIDP (345 aa)) are N-terminal domain. EF-hand domains follow at residues 93 to 121 (YNKETVRLLASAADTTKDGDISFEEFCAF), 127 to 162 (SPDALYLTAFELFDRNASDTISCDEFEAVIRHTQPL), 165 to 195 (QDFDFSSEFIKRYFGADKQRNVNYHSFCQLL), and 198 to 233 (FYEEQGIQAFKRYDKNGNGTISSLDFQQIMTTVKGH). Ca(2+)-binding residues include Asp106, Thr108, Asp110, Glu117, Asp140, Asn142, Ser144, Thr146, and Glu151. Residues Asp211, Asn213, Asn215, Thr217, and Asp222 each coordinate Ca(2+). Positions 346 to 362 (ERLKRVSQMDRLINIKA) are linker loop domain. The tract at residues 372-664 (GTAFLESAYR…RLFYVDFAGS (293 aa)) is carrier domain. 3 Solcar repeats span residues 376 to 468 (LESA…MRDK), 475 to 560 (IPLY…AKLA), and 568 to 656 (NSPG…LQRL). Helical transmembrane passes span 382–399 (FLLGSVAGACGATAVYPI), 443–462 (GLLPQIVGVAPEKAIKLTMN), 485–498 (GTGGMCQVVFTNPL), 535–554 (GSRACFLRDIPFSAIYFPAY), 574–591 (FASAFIAGVPAAGLVTPA), and 631–650 (GTAARVCRSSPQFAVTLLTY). Positions 665-716 (RPTGSELATTKTIQDESSTNPDHVGGYKLAAATFSGIEHKFGLFLPKFETSK) are C-terminal domain.

This sequence belongs to the mitochondrial carrier (TC 2.A.29) family. Homodimer (via N-terminus).

The protein localises to the mitochondrion inner membrane. Its function is as follows. Mitochondrial and calcium-binding carrier that catalyzes the calcium-dependent exchange of cytoplasmic glutamate with mitochondrial aspartate across the mitochondrial inner membrane. The protein is Probable calcium-binding mitochondrial carrier K02F3.2 of Caenorhabditis elegans.